Here is a 461-residue protein sequence, read N- to C-terminus: Bifunctional enzyme LpxC/FabZ (461 aa).

The tract at residues 1-302 (MLKQKTLKDS…FARQMRKEIR (302 aa)) is UDP-3-O-acyl-N-acetylglucosamine deacetylase. The Zn(2+) site is built by His78, His260, and Asp264. Residue His287 is the Proton donor of the active site. The interval 303 to 461 (LHEIQAPTYD…EFMAQIVKNK (159 aa)) is 3-hydroxyacyl-[acyl-carrier-protein] dehydratase. His364 is a catalytic residue.

The protein in the N-terminal section; belongs to the LpxC family. This sequence in the C-terminal section; belongs to the thioester dehydratase family. Zn(2+) serves as cofactor.

The protein resides in the cytoplasm. It carries out the reaction a UDP-3-O-[(3R)-3-hydroxyacyl]-N-acetyl-alpha-D-glucosamine + H2O = a UDP-3-O-[(3R)-3-hydroxyacyl]-alpha-D-glucosamine + acetate. It catalyses the reaction a (3R)-hydroxyacyl-[ACP] = a (2E)-enoyl-[ACP] + H2O. The protein operates within glycolipid biosynthesis; lipid IV(A) biosynthesis; lipid IV(A) from (3R)-3-hydroxytetradecanoyl-[acyl-carrier-protein] and UDP-N-acetyl-alpha-D-glucosamine: step 2/6. Its function is as follows. Catalyzes the hydrolysis of UDP-3-O-myristoyl-N-acetylglucosamine to form UDP-3-O-myristoylglucosamine and acetate, the committed step in lipid A biosynthesis. Functionally, involved in unsaturated fatty acids biosynthesis. Catalyzes the dehydration of short chain beta-hydroxyacyl-ACPs and long chain saturated and unsaturated beta-hydroxyacyl-ACPs. The polypeptide is Bifunctional enzyme LpxC/FabZ (lpxC/fabZ) (Bacteroides thetaiotaomicron (strain ATCC 29148 / DSM 2079 / JCM 5827 / CCUG 10774 / NCTC 10582 / VPI-5482 / E50)).